The sequence spans 262 residues: Regulatory protein RecX (262 aa).

It belongs to the RecX family.

It is found in the cytoplasm. Modulates RecA activity. The sequence is that of Regulatory protein RecX from Photobacterium profundum (strain SS9).